The sequence spans 643 residues: Threonine--tRNA ligase (643 aa).

The TGS domain maps to 3–64 (DVVKITFPDG…EEDGAISIIT (62 aa)). Residues 245–542 (DHRKLGKELD…LIEEYKGAFP (298 aa)) form a catalytic region. Cys338, His389, and His519 together coordinate Zn(2+).

Belongs to the class-II aminoacyl-tRNA synthetase family. In terms of assembly, homodimer. The cofactor is Zn(2+).

It localises to the cytoplasm. The catalysed reaction is tRNA(Thr) + L-threonine + ATP = L-threonyl-tRNA(Thr) + AMP + diphosphate + H(+). In terms of biological role, catalyzes the attachment of threonine to tRNA(Thr) in a two-step reaction: L-threonine is first activated by ATP to form Thr-AMP and then transferred to the acceptor end of tRNA(Thr). Also edits incorrectly charged L-seryl-tRNA(Thr). The chain is Threonine--tRNA ligase from Anoxybacillus flavithermus (strain DSM 21510 / WK1).